A 318-amino-acid polypeptide reads, in one-letter code: NADH-ubiquinone oxidoreductase chain 1 (318 aa).

Transmembrane regions (helical) follow at residues 2–22, 70–90, 98–118, 140–160, 173–193, 217–237, 253–273, and 294–314; these read FTIN…FLTL, LYMA…TPLP, FNLG…SILW, ISYG…SGSF, WLLL…LAET, AGSF…MNAL, ELYT…FLWI, and LPLT…LSGI.

Belongs to the complex I subunit 1 family.

Its subcellular location is the mitochondrion inner membrane. The enzyme catalyses a ubiquinone + NADH + 5 H(+)(in) = a ubiquinol + NAD(+) + 4 H(+)(out). In terms of biological role, core subunit of the mitochondrial membrane respiratory chain NADH dehydrogenase (Complex I) that is believed to belong to the minimal assembly required for catalysis. Complex I functions in the transfer of electrons from NADH to the respiratory chain. The immediate electron acceptor for the enzyme is believed to be ubiquinone. The chain is NADH-ubiquinone oxidoreductase chain 1 (MT-ND1) from Sapajus apella (Brown-capped capuchin).